The following is a 307-amino-acid chain: Cilia-and flagella-associated protein 96 (307 aa).

Disordered stretches follow at residues 73 to 102 (YSDP…SSGE) and 218 to 279 (HSQK…GPKT).

It belongs to the CFAP96 family.

The protein localises to the cytoplasm. It localises to the cytoskeleton. Its subcellular location is the microtubule organizing center. It is found in the centrosome. The protein is Cilia-and flagella-associated protein 96 (cfap96.L) of Xenopus laevis (African clawed frog).